The sequence spans 62 residues: Zinc metalloproteinase-disintegrin-like BaG (62 aa).

The Peptidase M12B domain maps to 24–54 (KTDLLNRSHDNAQLSPINLVVAVIMAHEMGH). The N-linked (GlcNAc...) asparagine glycan is linked to Asn29. Position 50 (His50) interacts with Zn(2+). Residue Glu51 is part of the active site. Zn(2+) is bound at residue His54.

The protein belongs to the venom metalloproteinase (M12B) family. P-III subfamily. P-IIIc sub-subfamily. As to quaternary structure, dimer. It depends on Zn(2+) as a cofactor. The N-terminus is blocked. In terms of tissue distribution, expressed by the venom gland.

It localises to the secreted. Inhibited by EDTA, and 1,10-phenanthroline. In terms of biological role, snake venom Zinc metalloproteinase that inhibits ADP-induced platelet aggregation and inhibits the alpha-5/beta-1 (ITGA5/ITGB1) integrin, a fibronectin receptor. Has caseinolytic activity. Induces the detachment of cells that are bound to fibronectin. This Bothrops alternatus (Urutu) protein is Zinc metalloproteinase-disintegrin-like BaG.